The chain runs to 115 residues: Cyclin-dependent kinase 2-associated protein 1 (115 aa).

The segment at 20–25 is interaction with CDK2AP2; that stretch reads GSVHSP. Ser46 carries the post-translational modification Phosphoserine; by IKKE.

The protein belongs to the CDK2AP family. Homodimer. Component of the nucleosome remodeling and deacetylase (NuRD) repressor complex, composed of core proteins MTA1, MTA2, MTA3, RBBP4, RBBP7, HDAC1, HDAC2, MBD2, MBD3, and peripherally associated proteins CDK2AP1, CDK2AP2, GATAD2A, GATAD2B, CHD3, CHD4 and CHD5. The exact stoichiometry of the NuRD complex is unknown, and some subunits such as MBD2 and MBD3, GATAD2A and GATAD2B, and CHD3, CHD4 and CHD5 define mutually exclusive NuRD complexes. Interacts with monomeric unphosphorylated CDK2. Interacts with CDK2AP2. Interacts with GATAD2A. Interacts with HDAC1. Interacts with HDAC2. Interacts with MBD2. Interacts with MBD3. Interacts with RBBP4. Interacts with RBBP7. Phosphorylated in vitro by IKBKE at Ser-46.

It localises to the nucleus. Its subcellular location is the chromosome. Inhibitor of cyclin-dependent kinase CDK2. Also acts as a component of the histone deacetylase NuRD complex which participates in the remodeling of chromatin. This chain is Cyclin-dependent kinase 2-associated protein 1 (CDK2AP1), found in Homo sapiens (Human).